The primary structure comprises 29 residues: Cytochrome b6-f complex subunit 8 (29 aa).

A helical membrane pass occupies residues isoleucine 3–valine 23.

This sequence belongs to the PetN family. In terms of assembly, the 4 large subunits of the cytochrome b6-f complex are cytochrome b6, subunit IV (17 kDa polypeptide, PetD), cytochrome f and the Rieske protein, while the 4 small subunits are PetG, PetL, PetM and PetN. The complex functions as a dimer.

The protein resides in the plastid. It is found in the chloroplast thylakoid membrane. Functionally, component of the cytochrome b6-f complex, which mediates electron transfer between photosystem II (PSII) and photosystem I (PSI), cyclic electron flow around PSI, and state transitions. The chain is Cytochrome b6-f complex subunit 8 from Chlorokybus atmophyticus (Soil alga).